The primary structure comprises 72 residues: Tetrahydromethanopterin S-methyltransferase subunit G (72 aa).

The helical transmembrane segment at 48 to 68 threads the bilayer; the sequence is IGILYGGFIGLLLFLIYTVVS.

The protein belongs to the MtrG family. In terms of assembly, the complex is composed of 8 subunits; MtrA, MtrB, MtrC, MtrD, MtrE, MtrF, MtrG and MtrH.

The protein localises to the cell membrane. The enzyme catalyses 5-methyl-5,6,7,8-tetrahydromethanopterin + coenzyme M + 2 Na(+)(in) = 5,6,7,8-tetrahydromethanopterin + methyl-coenzyme M + 2 Na(+)(out). Its pathway is one-carbon metabolism; methanogenesis from CO(2); methyl-coenzyme M from 5,10-methylene-5,6,7,8-tetrahydromethanopterin: step 2/2. Its function is as follows. Part of a complex that catalyzes the formation of methyl-coenzyme M and tetrahydromethanopterin from coenzyme M and methyl-tetrahydromethanopterin. This is an energy-conserving, sodium-ion translocating step. The chain is Tetrahydromethanopterin S-methyltransferase subunit G from Methanosarcina barkeri (strain Fusaro / DSM 804).